The primary structure comprises 90 residues: Probable Fe(2+)-trafficking protein (90 aa).

The protein belongs to the Fe(2+)-trafficking protein family.

Functionally, could be a mediator in iron transactions between iron acquisition and iron-requiring processes, such as synthesis and/or repair of Fe-S clusters in biosynthetic enzymes. This chain is Probable Fe(2+)-trafficking protein, found in Colwellia psychrerythraea (strain 34H / ATCC BAA-681) (Vibrio psychroerythus).